Reading from the N-terminus, the 665-residue chain is ATPase WRNIP1 (665 aa).

A UBZ4-type zinc finger spans residues 17 to 44 (QVQCPVCQQMMPAAHINSHLDRCLLLHP). Residues cysteine 20, cysteine 23, histidine 31, histidine 35, and cysteine 39 each coordinate Zn(2+). The interval 48–190 (AEPAAGSHRA…DGEDDPGHWD (143 aa)) is disordered. Residues serine 65 and serine 75 each carry the phosphoserine modification. Residues 76–89 (ESSALKQPATPTAA) show a composition bias toward polar residues. A Glycyl lysine isopeptide (Lys-Gly) (interchain with G-Cter in ubiquitin) cross-link involves residue lysine 81. Threonine 85 carries the post-translational modification Phosphothreonine. Residues serine 91 and serine 92 each carry the phosphoserine modification. Residues 92–104 (SEGEGEEGDDGGE) show a composition bias toward acidic residues. The residue at position 116 (threonine 116) is a Phosphothreonine. Residues 130 to 155 (RSSSPGRKGSGKRPAAAAAAGSASPR) are compositionally biased toward low complexity. Serine 139 is modified (phosphoserine). A Glycyl lysine isopeptide (Lys-Gly) (interchain with G-Cter in ubiquitin) cross-link involves residue lysine 141. Serine 153 carries the post-translational modification Phosphoserine. Acidic residues predominate over residues 159 to 184 (EAEAQEEEEAVGDGDGDGDADADGED). Lysine 225 participates in a covalent cross-link: Glycyl lysine isopeptide (Lys-Gly) (interchain with G-Cter in ubiquitin). 270 to 276 (PGCGKTT) is an ATP binding site. Glycyl lysine isopeptide (Lys-Gly) (interchain with G-Cter in ubiquitin) cross-links involve residues lysine 301, lysine 310, lysine 316, lysine 322, and lysine 335. Residue lysine 482 forms a Glycyl lysine isopeptide (Lys-Gly) (interchain with G-Cter in SUMO2); alternate linkage. A Glycyl lysine isopeptide (Lys-Gly) (interchain with G-Cter in ubiquitin); alternate cross-link involves residue lysine 482. 2 positions are modified to phosphotyrosine: tyrosine 534 and tyrosine 562. A Glycyl lysine isopeptide (Lys-Gly) (interchain with G-Cter in ubiquitin) cross-link involves residue lysine 627. Lysine 633 is covalently cross-linked (Glycyl lysine isopeptide (Lys-Gly) (interchain with G-Cter in ubiquitin); alternate). Lysine 633 is subject to N6-acetyllysine; alternate. A Glycyl lysine isopeptide (Lys-Gly) (interchain with G-Cter in ubiquitin) cross-link involves residue lysine 636.

It belongs to the AAA ATPase family. RarA/MGS1/WRNIP1 subfamily. Forms homooligomers, possibly octamers. Directly interacts with POLD1, POLD2 and POLD4. Interacts with the N-terminal domain of WRN. Interacts (via UBZ4-type zinc finger) with monoubiquitin and polyubiquitin. Interacts with TRIM14 and PPP6C; these interactions positively regulate the RIGI signaling pathway. In terms of processing, sumoylated with SUMO1 and SUMO2/3. In terms of tissue distribution, ubiquitously expressed.

Its subcellular location is the nucleus. It localises to the cytoplasm. It catalyses the reaction ATP + H2O = ADP + phosphate + H(+). Functions as a modulator of initiation or reinitiation events during DNA polymerase delta-mediated DNA synthesis. In the presence of ATP, stimulation of DNA polymerase delta-mediated DNA synthesis is decreased. Also plays a role in the innate immune defense against viruses. Stabilizes the RIGI dsRNA interaction and promotes RIGI 'Lys-63'-linked polyubiquitination. In turn, RIGI transmits the signal through mitochondrial MAVS. The sequence is that of ATPase WRNIP1 from Homo sapiens (Human).